A 651-amino-acid polypeptide reads, in one-letter code: Acetyl-coenzyme A synthetase (651 aa).

Residues 189–192 (RGGK), T311, and N335 contribute to the CoA site. ATP is bound by residues 387–389 (GEP), 411–416 (DTWWQT), D500, and R515. S523 is a binding site for CoA. Residue R526 participates in ATP binding. 3 residues coordinate Mg(2+): V537, H539, and V542. R584 contacts CoA. Residue K609 is modified to N6-acetyllysine.

Belongs to the ATP-dependent AMP-binding enzyme family. Requires Mg(2+) as cofactor. Acetylated. Deacetylation by the SIR2-homolog deacetylase activates the enzyme.

The enzyme catalyses acetate + ATP + CoA = acetyl-CoA + AMP + diphosphate. Catalyzes the conversion of acetate into acetyl-CoA (AcCoA), an essential intermediate at the junction of anabolic and catabolic pathways. AcsA undergoes a two-step reaction. In the first half reaction, AcsA combines acetate with ATP to form acetyl-adenylate (AcAMP) intermediate. In the second half reaction, it can then transfer the acetyl group from AcAMP to the sulfhydryl group of CoA, forming the product AcCoA. In Agrobacterium fabrum (strain C58 / ATCC 33970) (Agrobacterium tumefaciens (strain C58)), this protein is Acetyl-coenzyme A synthetase.